The sequence spans 635 residues: Threonine--tRNA ligase (635 aa).

Residues M1–T61 form the TGS domain. Positions D242–P533 are catalytic. Zn(2+) is bound by residues C333, H384, and H510.

The protein belongs to the class-II aminoacyl-tRNA synthetase family. In terms of assembly, homodimer. It depends on Zn(2+) as a cofactor.

It is found in the cytoplasm. The catalysed reaction is tRNA(Thr) + L-threonine + ATP = L-threonyl-tRNA(Thr) + AMP + diphosphate + H(+). Its function is as follows. Catalyzes the attachment of threonine to tRNA(Thr) in a two-step reaction: L-threonine is first activated by ATP to form Thr-AMP and then transferred to the acceptor end of tRNA(Thr). Also edits incorrectly charged L-seryl-tRNA(Thr). The polypeptide is Threonine--tRNA ligase (Methylobacillus flagellatus (strain ATCC 51484 / DSM 6875 / VKM B-1610 / KT)).